The chain runs to 734 residues: Photosystem I P700 chlorophyll a apoprotein A2 (734 aa).

Transmembrane regions (helical) follow at residues 46–69 (IFAS…FHVA), 135–158 (LYTG…LHLQ), 175–199 (LNHH…HVAI), 273–291 (MAHH…GHMY), 330–353 (LHFQ…QHMY), 369–395 (AALY…IFFI), 417–439 (AIIS…LYVH), and 517–535 (FLVH…LILV). The [4Fe-4S] cluster site is built by C559 and C568. 2 helical membrane passes run 575 to 596 (AFYL…YWHW) and 643 to 665 (LSVW…MFLI). 3 residues coordinate chlorophyll a: H654, M662, and Y670. Residue W671 participates in phylloquinone binding. The helical transmembrane segment at 707 to 727 (LVGLAHFSVGYIFTYAAFLIA) threads the bilayer.

It belongs to the PsaA/PsaB family. In terms of assembly, the PsaA/B heterodimer binds the P700 chlorophyll special pair and subsequent electron acceptors. PSI consists of a core antenna complex that captures photons, and an electron transfer chain that converts photonic excitation into a charge separation. The eukaryotic PSI reaction center is composed of at least 11 subunits. It depends on P700 is a chlorophyll a/chlorophyll a' dimer, A0 is one or more chlorophyll a, A1 is one or both phylloquinones and FX is a shared 4Fe-4S iron-sulfur center. as a cofactor.

The protein localises to the plastid. It is found in the chloroplast thylakoid membrane. The catalysed reaction is reduced [plastocyanin] + hnu + oxidized [2Fe-2S]-[ferredoxin] = oxidized [plastocyanin] + reduced [2Fe-2S]-[ferredoxin]. Functionally, psaA and PsaB bind P700, the primary electron donor of photosystem I (PSI), as well as the electron acceptors A0, A1 and FX. PSI is a plastocyanin-ferredoxin oxidoreductase, converting photonic excitation into a charge separation, which transfers an electron from the donor P700 chlorophyll pair to the spectroscopically characterized acceptors A0, A1, FX, FA and FB in turn. Oxidized P700 is reduced on the lumenal side of the thylakoid membrane by plastocyanin. The polypeptide is Photosystem I P700 chlorophyll a apoprotein A2 (Cucumis sativus (Cucumber)).